A 298-amino-acid chain; its full sequence is Probable GTP 3',8-cyclase (298 aa).

In terms of domain architecture, Radical SAM core spans 4–227 (RYGREIRSFR…MQNRKKYLID (224 aa)). Position 13 (Arg-13) interacts with GTP. [4Fe-4S] cluster is bound by residues Cys-20 and Cys-24. Residue Tyr-26 participates in S-adenosyl-L-methionine binding. Cys-27 serves as a coordination point for [4Fe-4S] cluster. Lys-61 is a GTP binding site. Gly-65 is a binding site for S-adenosyl-L-methionine. Residue Thr-91 participates in GTP binding. Ser-115 contributes to the S-adenosyl-L-methionine binding site. Lys-152 is a binding site for GTP. Cys-243 and Cys-246 together coordinate [4Fe-4S] cluster. 248 to 250 (RIR) is a GTP binding site. Residue Cys-260 participates in [4Fe-4S] cluster binding.

This sequence belongs to the radical SAM superfamily. MoaA family. [4Fe-4S] cluster serves as cofactor.

It carries out the reaction GTP + AH2 + S-adenosyl-L-methionine = (8S)-3',8-cyclo-7,8-dihydroguanosine 5'-triphosphate + 5'-deoxyadenosine + L-methionine + A + H(+). It functions in the pathway cofactor biosynthesis; molybdopterin biosynthesis. Catalyzes the cyclization of GTP to (8S)-3',8-cyclo-7,8-dihydroguanosine 5'-triphosphate. The polypeptide is Probable GTP 3',8-cyclase (Methanococcus maripaludis (strain C5 / ATCC BAA-1333)).